The following is a 268-amino-acid chain: tRNA pseudouridine synthase A (268 aa).

The active-site Nucleophile is Asp-52. Residue Tyr-110 participates in substrate binding.

It belongs to the tRNA pseudouridine synthase TruA family. Homodimer.

It carries out the reaction uridine(38/39/40) in tRNA = pseudouridine(38/39/40) in tRNA. Functionally, formation of pseudouridine at positions 38, 39 and 40 in the anticodon stem and loop of transfer RNAs. This chain is tRNA pseudouridine synthase A, found in Prochlorococcus marinus (strain MIT 9301).